A 215-amino-acid chain; its full sequence is Pyrrolidone-carboxylate peptidase (215 aa).

Residues glutamate 81, cysteine 144, and histidine 168 contribute to the active site.

This sequence belongs to the peptidase C15 family. As to quaternary structure, homotetramer.

It is found in the cytoplasm. The enzyme catalyses Release of an N-terminal pyroglutamyl group from a polypeptide, the second amino acid generally not being Pro.. Removes 5-oxoproline from various penultimate amino acid residues except L-proline. The chain is Pyrrolidone-carboxylate peptidase (pcp) from Bacillus amyloliquefaciens (Bacillus velezensis).